The following is a 100-amino-acid chain: Aspartyl/glutamyl-tRNA(Asn/Gln) amidotransferase subunit C (100 aa).

It belongs to the GatC family. Heterotrimer of A, B and C subunits.

The catalysed reaction is L-glutamyl-tRNA(Gln) + L-glutamine + ATP + H2O = L-glutaminyl-tRNA(Gln) + L-glutamate + ADP + phosphate + H(+). It catalyses the reaction L-aspartyl-tRNA(Asn) + L-glutamine + ATP + H2O = L-asparaginyl-tRNA(Asn) + L-glutamate + ADP + phosphate + 2 H(+). Its function is as follows. Allows the formation of correctly charged Asn-tRNA(Asn) or Gln-tRNA(Gln) through the transamidation of misacylated Asp-tRNA(Asn) or Glu-tRNA(Gln) in organisms which lack either or both of asparaginyl-tRNA or glutaminyl-tRNA synthetases. The reaction takes place in the presence of glutamine and ATP through an activated phospho-Asp-tRNA(Asn) or phospho-Glu-tRNA(Gln). In Rickettsia africae (strain ESF-5), this protein is Aspartyl/glutamyl-tRNA(Asn/Gln) amidotransferase subunit C.